We begin with the raw amino-acid sequence, 399 residues long: Probable peptidoglycan glycosyltransferase FtsW (399 aa).

Over M1–N32 the chain is Cytoplasmic. Residues V33 to S53 traverse the membrane as a helical segment. Topologically, residues M54–A72 are periplasmic. A helical membrane pass occupies residues I73 to W93. Residues F94–T97 are Cytoplasmic-facing. Residues F98–V118 traverse the membrane as a helical segment. The Periplasmic segment spans residues N119–R126. The chain crosses the membrane as a helical span at residues L127–A147. The Cytoplasmic segment spans residues D148–T159. The chain crosses the membrane as a helical span at residues H160–A180. Topologically, residues E181–D183 are periplasmic. A helical membrane pass occupies residues L184–P204. Topologically, residues P205–Q207 are cytoplasmic. A helical transmembrane segment spans residues F208–Y228. The Periplasmic segment spans residues R229–E292. A helical membrane pass occupies residues F293 to I313. Topologically, residues K314–A327 are cytoplasmic. The helical transmembrane segment at G328–M348 threads the bilayer. Residues N349 to T359 lie on the Periplasmic side of the membrane. Residues L360 to I380 form a helical membrane-spanning segment. The Cytoplasmic segment spans residues L381–F399.

It belongs to the SEDS family. FtsW subfamily.

Its subcellular location is the cell inner membrane. It catalyses the reaction [GlcNAc-(1-&gt;4)-Mur2Ac(oyl-L-Ala-gamma-D-Glu-L-Lys-D-Ala-D-Ala)](n)-di-trans,octa-cis-undecaprenyl diphosphate + beta-D-GlcNAc-(1-&gt;4)-Mur2Ac(oyl-L-Ala-gamma-D-Glu-L-Lys-D-Ala-D-Ala)-di-trans,octa-cis-undecaprenyl diphosphate = [GlcNAc-(1-&gt;4)-Mur2Ac(oyl-L-Ala-gamma-D-Glu-L-Lys-D-Ala-D-Ala)](n+1)-di-trans,octa-cis-undecaprenyl diphosphate + di-trans,octa-cis-undecaprenyl diphosphate + H(+). The protein operates within cell wall biogenesis; peptidoglycan biosynthesis. Its function is as follows. Peptidoglycan polymerase that is essential for cell division. The sequence is that of Probable peptidoglycan glycosyltransferase FtsW from Acinetobacter baylyi (strain ATCC 33305 / BD413 / ADP1).